The chain runs to 150 residues: Allograft inflammatory factor 1-like (150 aa).

Position 2 is an N-acetylserine (Ser2). The residue at position 2 (Ser2) is a Phosphoserine. The region spanning 47-82 (EKLAAFKEKYMEFDLNNEGEIDLMSLKRMMEKLGVP) is the EF-hand 1 domain. Residues Asp60, Asn62, Glu64, and Glu66 each coordinate Ca(2+). The region spanning 83-117 (KTHLEMKKMISEVTGGVSDTISYRDFVNMMLGKRS) is the EF-hand 2; degenerate domain. A disordered region spans residues 129–150 (KANESSPKPAGPPPERDIASLP). Residue Ser134 is modified to Phosphoserine.

As to quaternary structure, homodimer (Potential). Monomer.

Its subcellular location is the cytoplasm. The protein localises to the cytoskeleton. The protein resides in the cell projection. It localises to the ruffle membrane. Actin-binding protein that promotes actin bundling. May neither bind calcium nor depend on calcium for function. In Mus musculus (Mouse), this protein is Allograft inflammatory factor 1-like (Aif1l).